A 103-amino-acid chain; its full sequence is MAKFIRNLADKAPSMVAAAVTYSKPRLATFWHYARVELVPPTLGEIPTAIQSMKSIIHSAQTGNFKHLTVKEAVLNGLVATEVWMWFYIGEIIGKRGIVGYDV.

A2 carries the N-acetylalanine modification. N6-acetyllysine is present on residues K11, K24, and K54.

This sequence belongs to the ATPase g subunit family. In terms of assembly, component of the ATP synthase complex composed at least of ATP5F1A/subunit alpha, ATP5F1B/subunit beta, ATP5MC1/subunit c (homooctomer), MT-ATP6/subunit a, MT-ATP8/subunit 8, ATP5ME/subunit e, ATP5MF/subunit f, ATP5MG/subunit g, ATP5MK/subunit k, ATP5MJ/subunit j, ATP5F1C/subunit gamma, ATP5F1D/subunit delta, ATP5F1E/subunit epsilon, ATP5PF/subunit F6, ATP5PB/subunit b, ATP5PD/subunit d, ATP5PO/subunit OSCP. ATP synthase complex consists of a soluble F(1) head domain (subunits alpha(3) and beta(3)) - the catalytic core - and a membrane F(0) domain - the membrane proton channel (subunits c, a, 8, e, f, g, k and j). These two domains are linked by a central stalk (subunits gamma, delta, and epsilon) rotating inside the F1 region and a stationary peripheral stalk (subunits F6, b, d, and OSCP).

It is found in the mitochondrion. The protein resides in the mitochondrion inner membrane. Functionally, subunit g, of the mitochondrial membrane ATP synthase complex (F(1)F(0) ATP synthase or Complex V) that produces ATP from ADP in the presence of a proton gradient across the membrane which is generated by electron transport complexes of the respiratory chain. ATP synthase complex consist of a soluble F(1) head domain - the catalytic core - and a membrane F(1) domain - the membrane proton channel. These two domains are linked by a central stalk rotating inside the F(1) region and a stationary peripheral stalk. During catalysis, ATP synthesis in the catalytic domain of F(1) is coupled via a rotary mechanism of the central stalk subunits to proton translocation. In vivo, can only synthesize ATP although its ATP hydrolase activity can be activated artificially in vitro. Part of the complex F(0) domain. This is ATP synthase F(0) complex subunit g, mitochondrial from Rattus norvegicus (Rat).